Reading from the N-terminus, the 260-residue chain is Movement protein (260 aa).

The tract at residues 230–260 (SGDTAEEAGEASSGEPHWVPEATAPRVRKAT) is disordered.

Functionally, transports viral genome to neighboring plant cells directly through plasmosdesmata, without any budding. The movement protein allows efficient cell to cell propagation, by bypassing the host cell wall barrier. Might act by forming tubules structures that increase the size exclusion limit (SEL) of plasmodesmata, thereby allowing viral ribonucleoproteins to spread directly to neighboring cells. Binds to ssRNA. In Groundnut rosette virus (strain MC1) (GRV), this protein is Movement protein.